Here is a 259-residue protein sequence, read N- to C-terminus: Isoprenyl transferase (259 aa).

The active site involves Asp30. Asp30 is a binding site for Mg(2+). Substrate contacts are provided by residues 31–34, Trp35, Arg43, His47, and 75–77; these read GNGR and STE. The active-site Proton acceptor is the Asn78. Substrate is bound by residues Trp79, Arg81, Arg198, and 204–206; that span reads RIS. Glu217 contributes to the Mg(2+) binding site.

This sequence belongs to the UPP synthase family. In terms of assembly, homodimer. Mg(2+) is required as a cofactor.

Functionally, catalyzes the condensation of isopentenyl diphosphate (IPP) with allylic pyrophosphates generating different type of terpenoids. The sequence is that of Isoprenyl transferase from Caulobacter vibrioides (strain ATCC 19089 / CIP 103742 / CB 15) (Caulobacter crescentus).